A 152-amino-acid chain; its full sequence is Transmembrane protein 35B (152 aa).

The first 21 residues, 1-21 (MLVSLGALRVLLGIFFTLTGA), serve as a signal peptide directing secretion. 3 helical membrane-spanning segments follow: residues 62 to 82 (AAVGWLELLAGLLLVVGPPVL), 85 to 105 (ISNVLLILLMMGAVFTLVVLE), and 111 to 131 (YIPAVVCLGLLLLLDSCQFLV).

Belongs to the DoxX family.

It is found in the membrane. This Rattus norvegicus (Rat) protein is Transmembrane protein 35B.